Consider the following 207-residue polypeptide: Small ribosomal subunit protein uS4 (207 aa).

The tract at residues 31–56 (KCKLDSKPGQHGRTSGARTSDYGNQL) is disordered. Over residues 42-53 (GRTSGARTSDYG) the composition is skewed to polar residues. An S4 RNA-binding domain is found at 97-157 (ARLDNVVYRM…EKSKKQVRIV (61 aa)).

Belongs to the universal ribosomal protein uS4 family. Part of the 30S ribosomal subunit. Contacts protein S5. The interaction surface between S4 and S5 is involved in control of translational fidelity.

In terms of biological role, one of the primary rRNA binding proteins, it binds directly to 16S rRNA where it nucleates assembly of the body of the 30S subunit. With S5 and S12 plays an important role in translational accuracy. In Janthinobacterium sp. (strain Marseille) (Minibacterium massiliensis), this protein is Small ribosomal subunit protein uS4.